The following is a 95-amino-acid chain: Large ribosomal subunit protein uL23 (95 aa).

This sequence belongs to the universal ribosomal protein uL23 family. In terms of assembly, part of the 50S ribosomal subunit. Contacts protein L29, and trigger factor when it is bound to the ribosome.

Functionally, one of the early assembly proteins it binds 23S rRNA. One of the proteins that surrounds the polypeptide exit tunnel on the outside of the ribosome. Forms the main docking site for trigger factor binding to the ribosome. The protein is Large ribosomal subunit protein uL23 of Desulforamulus reducens (strain ATCC BAA-1160 / DSM 100696 / MI-1) (Desulfotomaculum reducens).